Reading from the N-terminus, the 141-residue chain is uncharacterized protein (141 aa).

The next 2 membrane-spanning stretches (helical) occupy residues 12–32 (GIAG…TLVT) and 35–55 (PGRV…SATW).

Its subcellular location is the cell membrane. This is an uncharacterized protein from Mycobacterium tuberculosis (strain CDC 1551 / Oshkosh).